Consider the following 243-residue polypeptide: DNA repair protein RecO (243 aa).

Belongs to the RecO family.

Involved in DNA repair and RecF pathway recombination. This chain is DNA repair protein RecO, found in Chlamydia trachomatis serovar L2 (strain ATCC VR-902B / DSM 19102 / 434/Bu).